The chain runs to 372 residues: Signal peptide peptidase-like 1 (372 aa).

Topologically, residues 1–6 are lumenal; the sequence is METLWT. A helical transmembrane segment spans residues 7-27; the sequence is LLYLLEPAPATLIVTAVTVTF. The Cytoplasmic portion of the chain corresponds to 28–54; sequence ASAFRALNYGKEMERNRDFSEASITLD. The chain crosses the membrane as a helical span at residues 55 to 77; that stretch reads SSQALMIPVMSSCSLLLMFYLFS. The Lumenal portion of the chain corresponds to 78–81; the sequence is SVSQ. The chain crosses the membrane as a helical span at residues 82 to 104; sequence LLTAFTAIASVSSLFYWLSPYAV. Residues 105–123 lie on the Cytoplasmic side of the membrane; sequence YMKTQLGLSDPFLSRCCSK. A helical membrane pass occupies residues 124 to 146; the sequence is SFTRIQGLLLVACAMTVVAWLIS. Topologically, residues 147–149 are lumenal; the sequence is GHW. A helical transmembrane segment spans residues 150–167; that stretch reads VLNNLLGISICIAFVSHV. Over 168–171 the chain is Cytoplasmic; that stretch reads RLPN. A helical membrane pass occupies residues 172 to 192; the sequence is IKICAMLLVCLFVYDIFWVFF. Asp186 is a catalytic residue. The Lumenal segment spans residues 193–257; that stretch reads SERFFGANVM…GVVPGVSASD (65 aa). Residues 258–278 traverse the membrane as a helical segment; the sequence is FMMLGLGDMAIPAMLLALVLC. Asp265 is an active-site residue. The Cytoplasmic portion of the chain corresponds to 279–301; the sequence is FDHRKTRDVVNIFDLKSSKGHKY. The helical transmembrane segment at 302 to 322 threads the bilayer; the sequence is IWYALPGYAIGLVAALAAGVL. Residues 323–325 lie on the Lumenal side of the membrane; the sequence is THS. The helical transmembrane segment at 326–346 threads the bilayer; sequence PQPALLYLVPSTLGPVIFMSW. A PAL motif is present at residues 328–330; it reads PAL. Residues 347–372 are Cytoplasmic-facing; that stretch reads RRKDLAELWEGPALSNPIEKSHEIEI.

It belongs to the peptidase A22B family. In terms of tissue distribution, ubiquitous.

It is found in the endosome membrane. In terms of biological role, intramembrane-cleaving aspartic protease (I-CLiP) that cleaves type II membrane signal peptides in the hydrophobic plane of the membrane. The chain is Signal peptide peptidase-like 1 (SPPL1) from Arabidopsis thaliana (Mouse-ear cress).